Reading from the N-terminus, the 357-residue chain is RGG repeats nuclear RNA binding protein C (357 aa).

N-acetylalanine is present on Ala2. The interval 25–232 (SQKVEKAAAA…AEEAEAREMT (208 aa)) is disordered. Residues 31 to 45 (AAAAVQPPKAAKFPT) show a composition bias toward low complexity. 2 stretches are compositionally biased toward gly residues: residues 63 to 82 (GGRG…GNGG) and 114 to 128 (SRGG…GGGR). Residues 143–155 (DVERPPRNYDRHS) are compositionally biased toward basic and acidic residues. The span at 159-172 (HGTGMKRNGGGRGN) shows a compositional bias: gly residues. The span at 190 to 232 (EVEKSPVAEKQGGEDETPEAKKELTAEEKAQKEAEEAEAREMT) shows a compositional bias: basic and acidic residues. The FF domain maps to 239 to 299 (ILEEKKKALQ…KDATEKAKKS (61 aa)). The interval 308-357 (PADGKRYNGRGGGSRGRGGRGGRGEGGNQRYAKEAAAPAIGDTAQFPSLG) is disordered. The segment covering 316-334 (GRGGGSRGRGGRGGRGEGG) has biased composition (gly residues). Ser355 bears the Phosphoserine mark.

It belongs to the SERBP1-HABP4 family.

It is found in the nucleus. Its subcellular location is the cytoplasm. The protein resides in the perinuclear region. Functionally, ribosome-binding protein that acts as a regulator of mRNA translation by promoting ribosome inactivation. Binds RNA. The chain is RGG repeats nuclear RNA binding protein C from Arabidopsis thaliana (Mouse-ear cress).